Consider the following 189-residue polypeptide: uncharacterized protein (189 aa).

4 helical membrane-spanning segments follow: residues 20 to 40 (FILG…YLTF), 46 to 66 (TIII…IILI), 100 to 120 (VLLF…SLNI), and 126 to 146 (FVLY…GDVI).

The protein to M.jannaschii MJ0795.1 and MJ1249.1.

The protein localises to the cell membrane. This is an uncharacterized protein from Methanocaldococcus jannaschii (strain ATCC 43067 / DSM 2661 / JAL-1 / JCM 10045 / NBRC 100440) (Methanococcus jannaschii).